The following is a 573-amino-acid chain: Putative ABC transporter ATP-binding protein LJ_1704 (573 aa).

ABC transporter domains lie at 6-247 and 303-536; these read IEFK…GVRE and LKLD…ASLK. Residues 40 to 47 and 337 to 344 contribute to the ATP site; these read GPSGSGKS and GQNGAGKT.

Belongs to the ABC transporter superfamily.

It is found in the cell membrane. In terms of biological role, probably part of an ABC transporter complex. Responsible for energy coupling to the transport system. The polypeptide is Putative ABC transporter ATP-binding protein LJ_1704 (Lactobacillus johnsonii (strain CNCM I-12250 / La1 / NCC 533)).